Here is a 2319-residue protein sequence, read N- to C-terminus: Coagulation factor VIII (2319 aa).

Positions 1–19 (MQIALFACFFLSLFNFCSS) are cleaved as a signal peptide. 2 Plastocyanin-like domains span residues 20-199 (AIRR…LLVC) and 207-349 (ERTQ…VDSC). The region spanning 20 to 349 (AIRRYYLGAV…MEAYVKVDSC (330 aa)) is the F5/8 type A 1 domain. The N-linked (GlcNAc...) asparagine glycan is linked to Asn61. Cysteines 173 and 199 form a disulfide. Asn233 and Asn259 each carry an N-linked (GlcNAc...) asparagine glycan. Residue Tyr367 is modified to Sulfotyrosine. Plastocyanin-like domains are found at residues 399 to 573 (KTWI…LLIC) and 583 to 730 (NQMM…VSSC). The F5/8 type A 2 domain maps to 399–730 (KTWIHYISAE…MTALLKVSSC (332 aa)). Residue Asn423 is glycosylated (N-linked (GlcNAc...) asparagine). Residues Cys547 and Cys573 are joined by a disulfide bond. Asn601 carries N-linked (GlcNAc...) asparagine glycosylation. A sulfotyrosine mark is found at Tyr737, Tyr738, and Tyr742. Residues 760–1640 (SFFQNTNHPN…IPPVLKRHQR (881 aa)) form a b region. Asn880, Asn958, Asn1015, Asn1022, Asn1026, Asn1044, Asn1076, Asn1087, Asn1136, Asn1161, Asn1192, Asn1255, Asn1268, Asn1273, Asn1274, Asn1302, Asn1316, Asn1340, and Asn1378 each carry an N-linked (GlcNAc...) asparagine glycan. The interval 1530-1549 (WNKAKRHGESIKGKTESSKN) is disordered. Residues 1536 to 1548 (HGESIKGKTESSK) are compositionally biased toward basic and acidic residues. Residues Tyr1669 and Tyr1687 each carry the sulfotyrosine modification. Plastocyanin-like domains follow at residues 1683-1845 (KTRH…LLIC) and 1855-2008 (GRQV…SKQC). The F5/8 type A 3 domain maps to 1683–2008 (KTRHYFIAAV…TLFLVYSKQC (326 aa)). N-linked (GlcNAc...) asparagine glycosylation is present at Asn1797. 3 cysteine pairs are disulfide-bonded: Cys1819–Cys1845, Cys2008–Cys2156, and Cys2161–Cys2313. 2 consecutive F5/8 type C domains span residues 2008 to 2156 (CQIP…LMGC) and 2161 to 2313 (CSIP…ILGC). An N-linked (GlcNAc...) asparagine glycan is attached at Asn2105.

This sequence belongs to the multicopper oxidase family. In terms of assembly, interacts with vWF. vWF binding is essential for the stabilization of F8 in circulation. The binding of vWF and activation depend on the sulfation of Tyr-1669. Post-translationally, proteolytically cleaved by cathepsin CTSG to produce a partially activated form. Found in most tissues.

Its subcellular location is the secreted. The protein localises to the extracellular space. Functionally, factor VIII, along with calcium and phospholipid, acts as a cofactor for factor IXa when it converts factor X to the activated form, factor Xa. The chain is Coagulation factor VIII (F8) from Mus musculus (Mouse).